Here is a 492-residue protein sequence, read N- to C-terminus: Trigger factor (492 aa).

A disordered region spans residues 77–96 (EILSSRGEKSATQPAISMTE). A PPIase FKBP-type domain is found at 169-254 (GDRVTMNYLG…VKEVAAAAAV (86 aa)). Positions 439–492 (ELLADDGEEETETKKKAPAKKKAAAKADDAAEGEEAAPKKKAPAKKKATEADAE) are disordered.

It belongs to the FKBP-type PPIase family. Tig subfamily.

It is found in the cytoplasm. It catalyses the reaction [protein]-peptidylproline (omega=180) = [protein]-peptidylproline (omega=0). Its function is as follows. Involved in protein export. Acts as a chaperone by maintaining the newly synthesized protein in an open conformation. Functions as a peptidyl-prolyl cis-trans isomerase. This chain is Trigger factor, found in Agrobacterium fabrum (strain C58 / ATCC 33970) (Agrobacterium tumefaciens (strain C58)).